We begin with the raw amino-acid sequence, 308 residues long: 1-acyl-sn-glycerol-3-phosphate acyltransferase (308 aa).

The next 3 helical transmembrane spans lie at phenylalanine 65–tryptophan 85, alanine 124–proline 144, and valine 148–alanine 168. The HXXXXD motif signature appears at histidine 130–aspartate 135.

This sequence belongs to the 1-acyl-sn-glycerol-3-phosphate acyltransferase family.

Its subcellular location is the membrane. It carries out the reaction a 1-acyl-sn-glycero-3-phosphate + an acyl-CoA = a 1,2-diacyl-sn-glycero-3-phosphate + CoA. Its function is as follows. Converts lysophosphatidic acid (LPA) into phosphatidic acid by incorporating acyl moiety at the 2 position. This enzyme shows a preference for medium-chain-length fatty acyl-coenzyme a substrates. This chain is 1-acyl-sn-glycerol-3-phosphate acyltransferase, found in Cocos nucifera (Coconut palm).